The primary structure comprises 593 residues: Aspartate--tRNA ligase (593 aa).

Residue glutamate 180 coordinates L-aspartate. The interval 204–207 (QIFK) is aspartate. Arginine 226 is an L-aspartate binding site. Residues 226-228 (RDE) and glutamine 235 contribute to the ATP site. Residue histidine 453 participates in L-aspartate binding. Glutamate 487 contributes to the ATP binding site. Arginine 494 lines the L-aspartate pocket. 539-542 (GLDR) contacts ATP.

It belongs to the class-II aminoacyl-tRNA synthetase family. Type 1 subfamily. Homodimer.

Its subcellular location is the cytoplasm. It carries out the reaction tRNA(Asp) + L-aspartate + ATP = L-aspartyl-tRNA(Asp) + AMP + diphosphate. Its function is as follows. Catalyzes the attachment of L-aspartate to tRNA(Asp) in a two-step reaction: L-aspartate is first activated by ATP to form Asp-AMP and then transferred to the acceptor end of tRNA(Asp). This Clostridium botulinum (strain Loch Maree / Type A3) protein is Aspartate--tRNA ligase.